The chain runs to 981 residues: Proline-rich transmembrane protein 3 (981 aa).

The N-terminal stretch at 1–27 (MASSPWGCVCGLLLLLLPLLGTGPALG) is a signal peptide. The Extracellular portion of the chain corresponds to 28–474 (RGFPRPLENS…RVLSFSWELH (447 aa)). Disordered regions lie at residues 43-107 (PGAH…GAQR) and 169-457 (PPSL…TAPP). Residues 65–85 (PRADSHRNSDVRHAPAEEMPE) show a composition bias toward basic and acidic residues. The segment at 297–302 (SWEVSS) is O-glycosylated at one site. A glycan (O-linked (GalNAc...) serine) is linked at Ser329. Positions 331-340 (APDRPSKPER) are enriched in basic and acidic residues. A glycan (O-linked (GalNAc...) threonine) is linked at Thr363. Asn379 carries an N-linked (GlcNAc...) asparagine glycan. The span at 411–427 (APSTSRRGLIRVTTQRA) shows a compositional bias: polar residues. The span at 437 to 457 (TASSMASAPASSPPANATAPP) shows a compositional bias: low complexity. A helical transmembrane segment spans residues 475 to 495 (VYGVGVLFLLPALLALAALAA). Residues 496 to 501 (APAGPR) lie on the Cytoplasmic side of the membrane. A helical membrane pass occupies residues 502 to 522 (LALVAAVLVLVASALRSAYML). The Extracellular segment spans residues 523-542 (TDPYGSQARLGVRGGLVLYN). The helical transmembrane segment at 543-563 (LPFPLLLTALAALTLLGLGAG) threads the bilayer. The Cytoplasmic portion of the chain corresponds to 564-570 (LPPPLQN). The chain crosses the membrane as a helical span at residues 571–591 (PLLLGAVALVHGVGLLATDLL). Residues 592–598 (STWSVLN) lie on the Extracellular side of the membrane. A helical membrane pass occupies residues 599–619 (LLTQGLSCAWGAAVALGTLCL). At 620–638 (CRRRLLDGPRGWDASPGPR) the chain is on the cytoplasmic side. Residues 639-659 (LLAVAGALGLLASGLQLAAAL) traverse the membrane as a helical segment. The Extracellular segment spans residues 660-679 (WLYPGPGRVGRFSWAWWGVH). Residues 680 to 700 (FWLRLLELTWALALALAAVAA) traverse the membrane as a helical segment. Residues 701 to 981 (ARPRPPTEHA…RSASSDTIEL (281 aa)) are Cytoplasmic-facing. The disordered stretch occupies residues 759 to 807 (AESGQLATPSSGAWGSAASLGRGPQGGPGLSRNGVGPAPSLSELDLRPP). Residues 765-780 (ATPSSGAWGSAASLGR) show a composition bias toward low complexity. At Ser777 the chain carries Phosphoserine. Omega-N-methylarginine is present on Arg780. Residues Ser789, Ser798, Ser808, Ser815, Ser854, Ser874, Ser902, Ser903, and Ser911 each carry the phosphoserine modification. Residues 836–865 (LRGLASPPPGGALRPRRGSHPKAELDDAGS) form a disordered region. Residues 937-981 (TVQLLPAPTPAPDSTAARQGDGQGEVQPRGKPGESRSASSDTIEL) form a disordered region. Residues 972-981 (RSASSDTIEL) show a composition bias toward polar residues.

Its subcellular location is the membrane. The polypeptide is Proline-rich transmembrane protein 3 (PRRT3) (Homo sapiens (Human)).